Here is a 1617-residue protein sequence, read N- to C-terminus: ATP-binding cassette sub-family A member 6 (1617 aa).

A helical membrane pass occupies residues 31–51 (LLEWGLSILLGLCIALFSSSM). N-linked (GlcNAc...) asparagine glycosylation is found at Asn84 and Asn109. 6 consecutive transmembrane segments (helical) span residues 222–242 (MFIL…SLNV), 268–288 (GLIY…IITF), 297–317 (FMVI…LVFL), 327–347 (LTNL…FTVF), 355–375 (LEWI…IQII), and 397–417 (IATF…ALYF). The 236-residue stretch at 478 to 713 (IRIRNVKKEY…WGLGYHLSLH (236 aa)) folds into the ABC transporter 1 domain. 514-521 (GHSGAGKS) is a binding site for ATP. A helical membrane pass occupies residues 854 to 874 (VLLTLLLVFGIAIFPLIVENI). An N-linked (GlcNAc...) asparagine glycan is attached at Asn940. A run of 6 helical transmembrane segments spans residues 1007–1027 (IGLW…LCSI), 1062–1082 (ALVD…IFYI), 1094–1114 (IVFA…FFIY), 1127–1147 (SGLW…ITLI), 1150–1170 (FDLS…LLGF), and 1194–1214 (ATDF…VFVL). An ABC transporter 2 domain is found at 1288–1513 (GQKKSCFSKR…LGKDYILELK (226 aa)). Residue 1320 to 1327 (GPNGAGKS) coordinates ATP.

The protein belongs to the ABC transporter superfamily. ABCA family. As to expression, widely expressed with higher expression in liver.

It localises to the golgi apparatus membrane. Functionally, probable transporter which may play a role in macrophage lipid transport and homeostasis. This chain is ATP-binding cassette sub-family A member 6 (ABCA6), found in Homo sapiens (Human).